We begin with the raw amino-acid sequence, 610 residues long: UvrABC system protein C (610 aa).

The region spanning 16-94 is the GIY-YIG domain; it reads SQPGVYRMYD…IKLYQPRYNV (79 aa). The 36-residue stretch at 204-239 folds into the UVR domain; that stretch reads QQVLNQLISRMESASRDLRFEDAARIRDQIQAVRRV.

It belongs to the UvrC family. Interacts with UvrB in an incision complex.

It localises to the cytoplasm. Functionally, the UvrABC repair system catalyzes the recognition and processing of DNA lesions. UvrC both incises the 5' and 3' sides of the lesion. The N-terminal half is responsible for the 3' incision and the C-terminal half is responsible for the 5' incision. The chain is UvrABC system protein C from Pectobacterium atrosepticum (strain SCRI 1043 / ATCC BAA-672) (Erwinia carotovora subsp. atroseptica).